The primary structure comprises 296 residues: MAEHLASIFGTEKDRVNCPFYFKIGACRHGDRCSRLHNRPTISPTLLLSNMYQRPDMITPGVDAQGQPLDPRKIQEHFEDFFEDLFEELGKFGEIESLNICDNLADHMIGNVYVQFKEEDQAAAALQALQGRFYSGRPIIADFSPVTDFREATCRQYEENNCNRGGYCNFMHVKLVSRELRRKLFGRYRRSYRRGSRSRSRSRSISPRNKRDNDRRDPSHREFSHRDRDREFYRHGSGKRSSERSERQERDGSRGRRQASPKRGGSPGGGREGSEERRARIEQWNREREEKEEGGA.

The segment at 12–40 (EKDRVNCPFYFKIGACRHGDRCSRLHNRP) adopts a C3H1-type 1 zinc-finger fold. In terms of domain architecture, RRM spans 44–146 (PTLLLSNMYQ…RPIIADFSPV (103 aa)). The C3H1-type 2 zinc-finger motif lies at 148 to 175 (DFREATCRQYEENNCNRGGYCNFMHVKL). Over residues 191 to 202 (SYRRGSRSRSRS) the composition is skewed to basic residues. The segment at 191-296 (SYRRGSRSRS…EREEKEEGGA (106 aa)) is disordered. Composition is skewed to basic and acidic residues over residues 209–254 (NKRD…DGSR) and 272–296 (EGSEERRARIEQWNREREEKEEGGA).

The protein belongs to the splicing factor SR family. In terms of assembly, component of the spliceosome. Homo- and heterodimer. Interacts with U2AF35B, RNU1 and SR45.

The protein localises to the nucleus speckle. Functionally, necessary for the splicing of pre-mRNA. Probably active at the 3' splice sites. In Arabidopsis thaliana (Mouse-ear cress), this protein is Splicing factor U2af small subunit A.